The following is a 30-amino-acid chain: Dermaseptin-3.1TR (30 aa).

As to expression, expressed by the skin glands.

The protein localises to the secreted. Functionally, has antimicrobial activity. In Phyllomedusa trinitatis (Trinidad leaf frog), this protein is Dermaseptin-3.1TR.